We begin with the raw amino-acid sequence, 271 residues long: Probable CAAX prenyl protease 2 (271 aa).

A run of 2 helical transmembrane segments spans residues 3-23 (VYLI…TFPV) and 42-62 (CISV…IIGP). Catalysis depends on proton donor/acceptor residues Glu-126 and His-160. Helical transmembrane passes span 174-194 (AYIA…VFGW) and 236-256 (IYYT…GITD).

Belongs to the peptidase U48 family.

The protein resides in the endoplasmic reticulum membrane. It catalyses the reaction Hydrolyzes the peptide bond -P2-(S-farnesyl or geranylgeranyl)C-P1'-P2'-P3'-COOH where P1' and P2' are amino acids with aliphatic sidechains and P3' is any C-terminal residue.. In terms of biological role, protease involved in the processing of a variety of prenylated proteins containing the C-terminal CAAX motif, where C is a cysteine modified with an isoprenoid lipid, A is an aliphatic amino acid and X is any C-terminal amino acid. Proteolytically removes the C-terminal three residues of farnesylated proteins, leaving the prenylated cysteine as the new C-terminus. The chain is Probable CAAX prenyl protease 2 from Schizosaccharomyces pombe (strain 972 / ATCC 24843) (Fission yeast).